Reading from the N-terminus, the 175-residue chain is Ribosome maturation factor RimM (175 aa).

One can recognise a PRC barrel domain in the interval 100–173 (EGEYYFHEII…IIIIRPMEGL (74 aa)).

Belongs to the RimM family. As to quaternary structure, binds ribosomal protein uS19.

The protein resides in the cytoplasm. Its function is as follows. An accessory protein needed during the final step in the assembly of 30S ribosomal subunit, possibly for assembly of the head region. Essential for efficient processing of 16S rRNA. May be needed both before and after RbfA during the maturation of 16S rRNA. It has affinity for free ribosomal 30S subunits but not for 70S ribosomes. This is Ribosome maturation factor RimM from Geobacillus thermodenitrificans (strain NG80-2).